A 573-amino-acid polypeptide reads, in one-letter code: E3 ubiquitin-protein ligase TRIM23 (573 aa).

Residues 31–76 form an RING-type; degenerate zinc finger; the sequence is CGVCEDVFSLQGDKVPRLLLCGHTVCHDCLTRLPLHGRAIRCPFDR. Residues 122–168 form a B box-type; degenerate zinc finger; that stretch reads ESIIRCDEDEAHVASVYCTVCATHLCSECSQVTHSTKTLAKHRRVPL. Residues 351–378 adopt a coiled-coil conformation; it reads RVVLAKQEITRLLETLQKQQQQFTEVAD. The tract at residues 390–573 is ARF-like; that stretch reads FTKDNRVYHG…LVAAGVLDVA (184 aa). Residues 411 to 418, 454 to 458, and 513 to 516 each bind GTP; these read LDGAGKTT, VGGKH, and KQDV.

This sequence in the C-terminal section; belongs to the small GTPase superfamily. Arf family. In terms of assembly, homodimer. Interacts with PSCD1. Interacts with UBE2D2. Interacts with TBK1 (via N-terminal kinase domain) and p62/SQSTM1.

The protein resides in the cytoplasm. It is found in the endomembrane system. The protein localises to the golgi apparatus membrane. Its subcellular location is the lysosome membrane. The catalysed reaction is S-ubiquitinyl-[E2 ubiquitin-conjugating enzyme]-L-cysteine + [acceptor protein]-L-lysine = [E2 ubiquitin-conjugating enzyme]-L-cysteine + N(6)-ubiquitinyl-[acceptor protein]-L-lysine.. Its pathway is protein modification; protein ubiquitination. In terms of biological role, acts as an E3 ubiquitin-protein ligase. Plays an essential role in autophagy activation during viral infection. Mechanistically, activates TANK-binding kinase 1/TBK1 by facilitating its dimerization and ability to phosphorylate the selective autophagy receptor SQSTM1. In order to achieve this function, TRIM23 mediates 'Lys-27'-linked auto-ubiquitination of its ADP-ribosylation factor (ARF) domain to induce its GTPase activity and its recruitment to autophagosomes. The polypeptide is E3 ubiquitin-protein ligase TRIM23 (Trim23) (Rattus norvegicus (Rat)).